The primary structure comprises 453 residues: Tryptophan biosynthesis protein TrpCF (453 aa).

The interval M1–E257 is indole-3-glycerol phosphate synthase. Residues N258–Y453 form an N-(5'-phosphoribosyl)anthranilate isomerase region.

It in the N-terminal section; belongs to the TrpC family. In the C-terminal section; belongs to the TrpF family. Monomer.

The enzyme catalyses N-(5-phospho-beta-D-ribosyl)anthranilate = 1-(2-carboxyphenylamino)-1-deoxy-D-ribulose 5-phosphate. It catalyses the reaction 1-(2-carboxyphenylamino)-1-deoxy-D-ribulose 5-phosphate + H(+) = (1S,2R)-1-C-(indol-3-yl)glycerol 3-phosphate + CO2 + H2O. It functions in the pathway amino-acid biosynthesis; L-tryptophan biosynthesis; L-tryptophan from chorismate: step 3/5. It participates in amino-acid biosynthesis; L-tryptophan biosynthesis; L-tryptophan from chorismate: step 4/5. Bifunctional enzyme that catalyzes two sequential steps of tryptophan biosynthetic pathway. The first reaction is catalyzed by the isomerase, coded by the TrpF domain; the second reaction is catalyzed by the synthase, coded by the TrpC domain. The sequence is that of Tryptophan biosynthesis protein TrpCF (trpC) from Escherichia coli (strain K12).